The primary structure comprises 617 residues: Translation initiation factor IF-2 (617 aa).

Positions 1–11 are enriched in basic residues; the sequence is MSKHKPRHFQK. The disordered stretch occupies residues 1–25; the sequence is MSKHKPRHFQKNKFDNRAKTSAKQQ. Positions 119–288 constitute a tr-type G domain; it reads PRPPIVTIMG…ILLVAEVEDY (170 aa). The interval 128 to 135 is G1; the sequence is GHVDHGKT. Residue 128–135 coordinates GTP; the sequence is GHVDHGKT. The G2 stretch occupies residues 153–157; sequence GITQK. Residues 175 to 178 form a G3 region; it reads DTPG. GTP-binding positions include 175 to 179 and 229 to 232; these read DTPGH and NKMD. The interval 229-232 is G4; sequence NKMD. The segment at 265–267 is G5; it reads SAL.

The protein belongs to the TRAFAC class translation factor GTPase superfamily. Classic translation factor GTPase family. IF-2 subfamily.

It is found in the cytoplasm. Its function is as follows. One of the essential components for the initiation of protein synthesis. Protects formylmethionyl-tRNA from spontaneous hydrolysis and promotes its binding to the 30S ribosomal subunits. Also involved in the hydrolysis of GTP during the formation of the 70S ribosomal complex. This is Translation initiation factor IF-2 (infB) from Mycoplasma pneumoniae (strain ATCC 29342 / M129 / Subtype 1) (Mycoplasmoides pneumoniae).